We begin with the raw amino-acid sequence, 101 residues long: Cyanovirin-N (101 aa).

2 disulfide bridges follow: Cys8–Cys22 and Cys58–Cys73.

Belongs to the cyanovirin-N family. In terms of assembly, in solution exists as a metastable domain-swapped homodimer which very slowly converts into a more stable monomeric form at room temperature. Under physiological conditions it is unlikely that the dimeric species exists and indeed the monomer is more active against HIV. Interacts with HIV-1 gp120. Post-translationally, cleavage, or reduction and alkylation of the disulfide bonds results in the loss of anti-HIV activity.

Mannose-binding lectin. This is Cyanovirin-N from Nostoc ellipsosporum.